Reading from the N-terminus, the 109-residue chain is Iron-sulfur cluster assembly protein CyaY (109 aa).

This sequence belongs to the frataxin family.

In terms of biological role, involved in iron-sulfur (Fe-S) cluster assembly. May act as a regulator of Fe-S biogenesis. This is Iron-sulfur cluster assembly protein CyaY from Burkholderia lata (strain ATCC 17760 / DSM 23089 / LMG 22485 / NCIMB 9086 / R18194 / 383).